The following is a 302-amino-acid chain: Phosphate butyryltransferase (302 aa).

This sequence belongs to the phosphate acetyltransferase and butyryltransferase family.

The enzyme catalyses butanoyl-CoA + phosphate = butanoyl phosphate + CoA. The protein operates within lipid metabolism; butanoate metabolism. Catalyzes the conversion of butyryl-CoA through butyryl phosphate to butyrate. The chain is Phosphate butyryltransferase (ptb) from Clostridium beijerinckii (strain ATCC 51743 / NCIMB 8052) (Clostridium acetobutylicum).